The following is a 270-amino-acid chain: L-fucose dehydrogenase (270 aa).

NAD(+) is bound by residues Arg19, Ile21, Asp40, Lys41, Asp62, Val63, Asn89, Tyr154, Lys158, Ile187, Thr189, and Leu191. Residue Tyr154 is the Proton acceptor of the active site.

It belongs to the short-chain dehydrogenases/reductases (SDR) family. Homotetramer. In terms of tissue distribution, detected in retina.

It is found in the cytoplasm. It carries out the reaction L-fucose + NAD(+) = L-fucono-1,5-lactone + NADH + H(+). The enzyme catalyses D-arabinose + NAD(+) = D-arabinono-1,5-lactone + NADH + H(+). It catalyses the reaction L-galactose + NAD(+) = L-galactono-1,5-lactone + NADH + H(+). Its pathway is carbohydrate degradation; L-fucose degradation. Its function is as follows. Catalyzes the NAD(+)-dependent oxidation of L-fucose, yielding L-fucono-1,5-lactone, which rapidly converts spontaneously to L-fucone-1,4-lactone. Can also act on D-arabinose and L-galactose, with lower catalytic efficiency. Does not use NADPH. May be the initial enzyme of the putative L-fucose degradation pathway in mammals. The chain is L-fucose dehydrogenase (HSD17B14) from Bos taurus (Bovine).